A 334-amino-acid chain; its full sequence is Catabolite repressor/activator (334 aa).

Residues 1-58 (MKLDEIARLAGVSRTTASYVINGKAKQYRVSDKTVEKVMAVVREHNYHPNAVAAGLRA) form the HTH lacI-type domain. The segment at residues 3–22 (LDEIARLAGVSRTTASYVIN) is a DNA-binding region (H-T-H motif).

Homotetramer.

Global transcriptional regulator, which plays an important role in the regulation of carbon metabolism. This is Catabolite repressor/activator (cra) from Escherichia coli O157:H7.